The primary structure comprises 845 residues: Extended synaptotagmin-2 (845 aa).

The segment covering 1–17 has biased composition (gly residues); that stretch reads MSSAGGEGPEAGPGRAG. Residues 1-26 form a disordered region; that stretch reads MSSAGGEGPEAGPGRAGGRSEPEAPG. Over 1-27 the chain is Cytoplasmic; the sequence is MSSAGGEGPEAGPGRAGGRSEPEAPGS. The chain crosses the membrane as a helical span at residues 28 to 48; sequence ALSVDLPGLLGQLARSFALLL. Over 49 to 51 the chain is Lumenal; it reads PVY. Residues 52-72 traverse the membrane as a helical segment; it reads ALGYLGLSFSWVLLALGLLAW. The Cytoplasmic portion of the chain corresponds to 73-845; it reads CRRSRGLKAS…EDGTRPQVIT (773 aa). The region spanning 115–294 is the SMP-LTD domain; the sequence is DTERAEWLNK…LPNRITVPLV (180 aa). C2 domains lie at 293-413 and 442-563; these read LVSE…DEWF and VLAD…QLSN. The Ca(2+) site is built by Lys-324, Asp-325, Asp-337, Asp-384, Glu-385, Asp-386, Asp-388, Asp-390, and Asp-391. Positions 584–664 are disordered; it reads QERPPDYQHS…RDLGRSSSSL (81 aa). Positions 612 to 628 are enriched in polar residues; sequence SQMSASPGTGGANTAPS. A phosphoserine mark is found at Ser-615 and Ser-617. Thr-629 carries the phosphothreonine modification. The span at 634 to 645 shows a compositional bias: basic and acidic residues; that stretch reads VDDKPAMEEKPQ. A phosphoserine mark is found at Ser-660, Ser-662, Ser-663, Ser-667, Ser-679, Ser-682, and Ser-685. One can recognise a C2 3 domain in the interval 710–832; the sequence is PLGQIQLTIR…ELAKGWTQWY (123 aa). The tract at residues 757 to 764 is required for phosphatidylinositol 4,5-bisphosphate-dependent location at the cell membrane; that stretch reads KRRSGRRK.

It belongs to the extended synaptotagmin family. Homodimer. Interacts with ESYT1 and ESYT3. Interacts with FGFR1 that has been activated by FGF1 binding. Interacts with the AP-2 complex; identified in a complex with the AP-2 complex and FGFR1.

The protein resides in the cell membrane. It localises to the endoplasmic reticulum membrane. Tethers the endoplasmic reticulum to the cell membrane and promotes the formation of appositions between the endoplasmic reticulum and the cell membrane. Binds glycerophospholipids in a barrel-like domain and may play a role in cellular lipid transport. Plays a role in FGF signaling via its role in the rapid internalization of FGFR1 that has been activated by FGF1 binding; this occurs most likely via the AP-2 complex. Promotes the localization of SACM1L at endoplasmic reticulum-plasma membrane contact sites (EPCS). This is Extended synaptotagmin-2 (Esyt2) from Mus musculus (Mouse).